A 223-amino-acid polypeptide reads, in one-letter code: Membrane protein (223 aa).

Over 1-18 (MAENCTLDSEQAVLLFKE) the chain is Virion surface. The chain crosses the membrane as a helical span at residues 19 to 39 (YNLFITAFLLFLTILLQYGYA). At 40–49 (TRSRTIYILK) the chain is on the intravirion side. Residues 50–70 (MIVLWCFWPLNIAVGVISCIY) form a helical membrane-spanning segment. Topologically, residues 71 to 75 (PPNTG) are virion surface. The chain crosses the membrane as a helical span at residues 76 to 96 (GLVAAIILTVFACLSFVGYWI). Topologically, residues 97–223 (QSCRLFKRCR…VATGGSSLYT (127 aa)) are intravirion.

This sequence belongs to the gammacoronaviruses M protein family. In terms of assembly, homomultimer. Interacts with envelope E protein in the budding compartment of the host cell, which is located between endoplasmic reticulum and the Golgi complex. Forms a complex with HE and S proteins. Interacts with nucleocapsid N protein. This interaction probably participates in RNA packaging into the virus.

It localises to the virion membrane. It is found in the host Golgi apparatus membrane. In terms of biological role, component of the viral envelope that plays a central role in virus morphogenesis and assembly via its interactions with other viral proteins. The sequence is that of Membrane protein from Gallus gallus (Chicken).